Consider the following 1918-residue polypeptide: Diacylglycerol kinase eta (1918 aa).

Residues 1–10 (MAHLKLDTLH) are compositionally biased toward basic and acidic residues. Residues 1 to 37 (MAHLKLDTLHVQRSPRGSRRSSPSSGRSSACSSGSIS) form a disordered region. Low complexity predominate over residues 20–37 (RSSPSSGRSSACSSGSIS). Residues 82 to 175 (AIIKEGFLLK…WLGGLKTATA (94 aa)) enclose the PH domain. 2 Phorbol-ester/DAG-type zinc fingers span residues 195–245 (HHHW…IANC) and 268–319 (PHQW…AVAC). The 137-residue stretch at 350 to 486 (GNFSPLLVFV…DRWSIMVFEK (137 aa)) folds into the DAGKc domain. Disordered stretches follow at residues 783–805 (GANI…NTPT), 1017–1067 (TTLC…DDNP), 1177–1212 (PNTI…GDSI), and 1380–1399 (ERDK…TEEA). Polar residues predominate over residues 1177-1189 (PNTILTTSTSPTK). Positions 1855 to 1918 (WSVNEVVTWL…LQAIKDLSEN (64 aa)) constitute an SAM domain.

Belongs to the eukaryotic diacylglycerol kinase family.

It is found in the cytoplasm. The enzyme catalyses a 1,2-diacyl-sn-glycerol + ATP = a 1,2-diacyl-sn-glycero-3-phosphate + ADP + H(+). Phosphorylates diacylglycerol (DAG) to generate phosphatidic acid (PA). This chain is Diacylglycerol kinase eta, found in Drosophila erecta (Fruit fly).